We begin with the raw amino-acid sequence, 186 residues long: MSATANLKKDYQERIVPALMKQFGYTSVMQVPVLKKIVINQGLGMATGDKKIIDVAVSELTAITGQKAVPTVSKKDISNFKLRKKMPIGVMVTLRREQMYEFLERLVRIALPRIRDFKGIESKLDGRGNYTLGINEQIIFPEINIDAITKILGMNITFVTSAQSDEEGYALLKEFGLPFKNAKKQN.

Belongs to the universal ribosomal protein uL5 family. In terms of assembly, part of the 50S ribosomal subunit; part of the 5S rRNA/L5/L18/L25 subcomplex. Contacts the 5S rRNA and the P site tRNA. Forms a bridge to the 30S subunit in the 70S ribosome.

This is one of the proteins that bind and probably mediate the attachment of the 5S RNA into the large ribosomal subunit, where it forms part of the central protuberance. In the 70S ribosome it contacts protein S13 of the 30S subunit (bridge B1b), connecting the 2 subunits; this bridge is implicated in subunit movement. Contacts the P site tRNA; the 5S rRNA and some of its associated proteins might help stabilize positioning of ribosome-bound tRNAs. The chain is Large ribosomal subunit protein uL5 from Porphyromonas gingivalis (strain ATCC 33277 / DSM 20709 / CIP 103683 / JCM 12257 / NCTC 11834 / 2561).